We begin with the raw amino-acid sequence, 24 residues long: Brevinin-1Bd (24 aa).

A disulfide bond links cysteine 18 and cysteine 24.

As to expression, expressed by the skin glands.

The protein localises to the secreted. Antibacterial activity against Gram-positive bacterium S.aureus and Gram-negative bacterium E.coli. Has activity against C.albicans. In Lithobates berlandieri (Rio Grande leopard frog), this protein is Brevinin-1Bd.